The chain runs to 245 residues: Pyridoxine 5'-phosphate synthase (245 aa).

3-amino-2-oxopropyl phosphate contacts are provided by Asn8 and Arg19. The active-site Proton acceptor is His44. Positions 46 and 51 each coordinate 1-deoxy-D-xylulose 5-phosphate. Glu76 serves as the catalytic Proton acceptor. Position 106 (Thr106) interacts with 1-deoxy-D-xylulose 5-phosphate. His198 serves as the catalytic Proton donor. 3-amino-2-oxopropyl phosphate is bound by residues Asp199 and 221–222; that span reads GH.

It belongs to the PNP synthase family. Homooctamer; tetramer of dimers.

The protein localises to the cytoplasm. The enzyme catalyses 3-amino-2-oxopropyl phosphate + 1-deoxy-D-xylulose 5-phosphate = pyridoxine 5'-phosphate + phosphate + 2 H2O + H(+). It functions in the pathway cofactor biosynthesis; pyridoxine 5'-phosphate biosynthesis; pyridoxine 5'-phosphate from D-erythrose 4-phosphate: step 5/5. Its function is as follows. Catalyzes the complicated ring closure reaction between the two acyclic compounds 1-deoxy-D-xylulose-5-phosphate (DXP) and 3-amino-2-oxopropyl phosphate (1-amino-acetone-3-phosphate or AAP) to form pyridoxine 5'-phosphate (PNP) and inorganic phosphate. In Brucella anthropi (strain ATCC 49188 / DSM 6882 / CCUG 24695 / JCM 21032 / LMG 3331 / NBRC 15819 / NCTC 12168 / Alc 37) (Ochrobactrum anthropi), this protein is Pyridoxine 5'-phosphate synthase.